The following is a 362-amino-acid chain: UDP-N-acetylglucosamine--N-acetylmuramyl-(pentapeptide) pyrophosphoryl-undecaprenol N-acetylglucosamine transferase (362 aa).

UDP-N-acetyl-alpha-D-glucosamine-binding positions include 11-13 (TGG), N124, R163, S191, I246, and Q291.

This sequence belongs to the glycosyltransferase 28 family. MurG subfamily.

It localises to the cell inner membrane. It carries out the reaction di-trans,octa-cis-undecaprenyl diphospho-N-acetyl-alpha-D-muramoyl-L-alanyl-D-glutamyl-meso-2,6-diaminopimeloyl-D-alanyl-D-alanine + UDP-N-acetyl-alpha-D-glucosamine = di-trans,octa-cis-undecaprenyl diphospho-[N-acetyl-alpha-D-glucosaminyl-(1-&gt;4)]-N-acetyl-alpha-D-muramoyl-L-alanyl-D-glutamyl-meso-2,6-diaminopimeloyl-D-alanyl-D-alanine + UDP + H(+). The protein operates within cell wall biogenesis; peptidoglycan biosynthesis. Its function is as follows. Cell wall formation. Catalyzes the transfer of a GlcNAc subunit on undecaprenyl-pyrophosphoryl-MurNAc-pentapeptide (lipid intermediate I) to form undecaprenyl-pyrophosphoryl-MurNAc-(pentapeptide)GlcNAc (lipid intermediate II). The polypeptide is UDP-N-acetylglucosamine--N-acetylmuramyl-(pentapeptide) pyrophosphoryl-undecaprenol N-acetylglucosamine transferase (Idiomarina loihiensis (strain ATCC BAA-735 / DSM 15497 / L2-TR)).